The following is a 260-amino-acid chain: Acetylglutamate kinase (260 aa).

Substrate contacts are provided by residues 46–47 (GG), arginine 68, and asparagine 160.

This sequence belongs to the acetylglutamate kinase family. ArgB subfamily.

Its subcellular location is the cytoplasm. The catalysed reaction is N-acetyl-L-glutamate + ATP = N-acetyl-L-glutamyl 5-phosphate + ADP. Its pathway is amino-acid biosynthesis; L-arginine biosynthesis; N(2)-acetyl-L-ornithine from L-glutamate: step 2/4. Its function is as follows. Catalyzes the ATP-dependent phosphorylation of N-acetyl-L-glutamate. This Shewanella oneidensis (strain ATCC 700550 / JCM 31522 / CIP 106686 / LMG 19005 / NCIMB 14063 / MR-1) protein is Acetylglutamate kinase.